A 473-amino-acid polypeptide reads, in one-letter code: Photosystem II CP43 reaction center protein (473 aa).

Residues 1-14 constitute a propeptide that is removed on maturation; the sequence is MKTLYSLRRFYPVE. T15 is subject to N-acetylthreonine. The residue at position 15 (T15) is a Phosphothreonine. 5 consecutive transmembrane segments (helical) span residues 69–93, 134–155, 178–200, 255–275, and 291–312; these read LFEV…PHLA, LLGP…KDRN, KALY…RKIT, KPFA…LSYS, and WFNN…ASQA. E367 provides a ligand contact to [CaMn4O5] cluster. A helical transmembrane segment spans residues 447–471; sequence RARAAAAGFEKGIDRDFEPVLSMTP.

The protein belongs to the PsbB/PsbC family. PsbC subfamily. In terms of assembly, PSII is composed of 1 copy each of membrane proteins PsbA, PsbB, PsbC, PsbD, PsbE, PsbF, PsbH, PsbI, PsbJ, PsbK, PsbL, PsbM, PsbT, PsbX, PsbY, PsbZ, Psb30/Ycf12, at least 3 peripheral proteins of the oxygen-evolving complex and a large number of cofactors. It forms dimeric complexes. Binds multiple chlorophylls and provides some of the ligands for the Ca-4Mn-5O cluster of the oxygen-evolving complex. It may also provide a ligand for a Cl- that is required for oxygen evolution. PSII binds additional chlorophylls, carotenoids and specific lipids. is required as a cofactor.

The protein localises to the plastid. The protein resides in the chloroplast thylakoid membrane. Its function is as follows. One of the components of the core complex of photosystem II (PSII). It binds chlorophyll and helps catalyze the primary light-induced photochemical processes of PSII. PSII is a light-driven water:plastoquinone oxidoreductase, using light energy to abstract electrons from H(2)O, generating O(2) and a proton gradient subsequently used for ATP formation. The protein is Photosystem II CP43 reaction center protein of Morus indica (Mulberry).